A 299-amino-acid polypeptide reads, in one-letter code: GTPase Era (299 aa).

An Era-type G domain is found at 5 to 172 (KSGFVSIIGR…IDVLKTYLPE (168 aa)). The G1 stretch occupies residues 13–20 (GRPNVGKS). 13–20 (GRPNVGKS) provides a ligand contact to GTP. Positions 39 to 43 (QTTRN) are G2. The interval 60–63 (DTPG) is G3. Residues 60 to 64 (DTPGI) and 122 to 125 (NKID) contribute to the GTP site. The segment at 122–125 (NKID) is G4. The segment at 151-153 (ISA) is G5. Residues 203–280 (TSEEIPHAIG…YLELWVKVQR (78 aa)) enclose the KH type-2 domain.

Belongs to the TRAFAC class TrmE-Era-EngA-EngB-Septin-like GTPase superfamily. Era GTPase family. In terms of assembly, monomer.

The protein localises to the cytoplasm. It is found in the cell membrane. Its function is as follows. An essential GTPase that binds both GDP and GTP, with rapid nucleotide exchange. Plays a role in 16S rRNA processing and 30S ribosomal subunit biogenesis and possibly also in cell cycle regulation and energy metabolism. This chain is GTPase Era, found in Staphylococcus aureus (strain Mu3 / ATCC 700698).